Here is a 213-residue protein sequence, read N- to C-terminus: Ras-like protein rasU (213 aa).

Position 21 to 28 (21 to 28) interacts with GTP; the sequence is GDGGVGKT. Positions 43 to 51 match the Effector region motif; the sequence is YDPTIEDLY. Residues 68 to 72 and 126 to 129 each bind GTP; these read DTAGQ and NKSD. Cysteine 210 is modified (cysteine methyl ester). Cysteine 210 carries the S-geranylgeranyl cysteine lipid modification. Residues 211–213 constitute a propeptide, removed in mature form; it reads KMI.

It belongs to the small GTPase superfamily. Ras family.

It is found in the cell membrane. It carries out the reaction GTP + H2O = GDP + phosphate + H(+). Ras proteins bind GDP/GTP and possess intrinsic GTPase activity. This is Ras-like protein rasU (rasU) from Dictyostelium discoideum (Social amoeba).